The primary structure comprises 227 residues: Ribonuclease 3 (227 aa).

The region spanning 4–133 is the RNase III domain; it reads FETLEKLLSY…LIAAIYLDSN (130 aa). Mg(2+) is bound at residue Glu-46. Asp-50 is an active-site residue. 2 residues coordinate Mg(2+): Asn-119 and Glu-122. Glu-122 is an active-site residue. The DRBM domain maps to 158–226; sequence DPKTALQEWA…ARSLLHRLKN (69 aa).

It belongs to the ribonuclease III family. Homodimer. Mg(2+) serves as cofactor.

The protein localises to the cytoplasm. The enzyme catalyses Endonucleolytic cleavage to 5'-phosphomonoester.. Functionally, digests double-stranded RNA. Involved in the processing of primary rRNA transcript to yield the immediate precursors to the large and small rRNAs (23S and 16S). Processes some mRNAs, and tRNAs when they are encoded in the rRNA operon. Processes pre-crRNA and tracrRNA of type II CRISPR loci if present in the organism. The sequence is that of Ribonuclease 3 from Rickettsia massiliae (strain Mtu5).